We begin with the raw amino-acid sequence, 359 residues long: Large ribosomal subunit protein uL3 (359 aa).

The segment at 336–359 (VRPPAKRPPAEAPQITYISRESKQ) is disordered.

It belongs to the universal ribosomal protein uL3 family. Part of the 50S ribosomal subunit. Forms a cluster with proteins L14 and L24e.

One of the primary rRNA binding proteins, it binds directly near the 3'-end of the 23S rRNA, where it nucleates assembly of the 50S subunit. This Thermococcus sibiricus (strain DSM 12597 / MM 739) protein is Large ribosomal subunit protein uL3.